The sequence spans 434 residues: GPI-anchor transamidase component PIGU (434 aa).

At 1–3 (MAA) the chain is on the cytoplasmic side. The helical transmembrane segment at 4–22 (PLALVLVVAVTVRAALFRS) threads the bilayer. The Lumenal portion of the chain corresponds to 23–78 (SLAEFISERVEVVSPLSSWKRVVEGLALLDLGVSPYSGAVFHETPLIIYLFHFLID). Residues 79–99 (YAELVFMITDALTAIALYFAI) traverse the membrane as a helical segment. Residues 100–136 (QDFNKVVFKKQKLLLELDQYAPDVAELIRTPMEMRYI) are Cytoplasmic-facing. Helical transmembrane passes span 137–157 (PLKVALYLLNPYTILSCVAKS), 158–177 (TCAINNTLIAFFILTTIKGS), 178–193 (VFLSAVFLALATYQSL), and 194–204 (YPVTLFAPGLL). Residues 205–221 (YLLQRQYIPVKVKSKAF) are Cytoplasmic-facing. Residue Lys215 coordinates a cardiolipin. Residues 222-243 (WIFSWEYAMMYTGSLVVIVCLS) traverse the membrane as a helical segment. Residues 244–285 (FFLLSSWDFIPAVYGFILSVPDLTPNIGLFWYFFAEMFEHFS) are Lumenal-facing. A helical transmembrane segment spans residues 286-305 (LFFVCVFQINVFFYTVPLAI). The Cytoplasmic segment spans residues 306–310 (KLKEH). Lys308 lines the a cardiolipin pocket. 2 helical membrane-spanning segments follow: residues 311-330 (PIFFMFIQIAIISIFKSYPT) and 331-344 (VGDVALYMAFFPVW). At 345 to 353 (NHLYRFLRN) the chain is on the cytoplasmic side. The helical transmembrane segment at 354–371 (IFVLTCIIIVCSLLFPVL) threads the bilayer. The Lumenal segment spans residues 372 to 383 (WHLWIYAGSANS). 2 residues coordinate a 2-acyl-6-[6-phosphoethanolamine-alpha-D-mannosyl-(1-&gt;2)-6-phosphoethanolamine-alpha-D-mannosyl-(1-&gt;6)-2-phosphoethanolamine-alpha-D-mannosyl-(1-&gt;4)-alpha-D-glucosaminyl]-1-(1-radyl,2-acyl-sn-glycero-3-phospho)-1D-myo-inositol: Asn382 and Asn384. A helical transmembrane segment spans residues 384–405 (NFFYAITLTFNVGQILLISDYF). Over 406 to 434 (YAFLRREYYLTHGLYLTAKDGTEAMLVLK) the chain is Cytoplasmic.

Belongs to the PIGU family. As to quaternary structure, heteropentamer. Part of the GPI-anchor transamidase complex, consisting of PIGK, PIGT, PIGS, PIGU and GAA1.

It is found in the endoplasmic reticulum membrane. It functions in the pathway glycolipid biosynthesis; glycosylphosphatidylinositol-anchor biosynthesis. Functionally, component of the glycosylphosphatidylinositol-anchor (GPI-anchor) transamidase (GPI-T) complex that catalyzes the formation of the linkage between a proprotein and a GPI-anchor and participates in GPI anchored protein biosynthesis. Binds the lipid portion of GPI-anchor. May act as an organizer in the transmembrane layer to recruit other subunits, and thus is essential for assembly of the complex. The protein is GPI-anchor transamidase component PIGU of Mus musculus (Mouse).